The chain runs to 443 residues: ATP-dependent protease ATPase subunit HslU (443 aa).

ATP-binding positions include Ile20, 62–67 (GVGKTE), Asp255, Glu321, and Arg393.

The protein belongs to the ClpX chaperone family. HslU subfamily. As to quaternary structure, a double ring-shaped homohexamer of HslV is capped on each side by a ring-shaped HslU homohexamer. The assembly of the HslU/HslV complex is dependent on binding of ATP.

The protein resides in the cytoplasm. Functionally, ATPase subunit of a proteasome-like degradation complex; this subunit has chaperone activity. The binding of ATP and its subsequent hydrolysis by HslU are essential for unfolding of protein substrates subsequently hydrolyzed by HslV. HslU recognizes the N-terminal part of its protein substrates and unfolds these before they are guided to HslV for hydrolysis. The chain is ATP-dependent protease ATPase subunit HslU from Helicobacter pylori (strain HPAG1).